Reading from the N-terminus, the 270-residue chain is ATP synthase subunit a (270 aa).

5 consecutive transmembrane segments (helical) span residues 37 to 57, 98 to 118, 143 to 163, 217 to 237, and 239 to 259; these read NVHI…LWVF, VAPL…MDLI, DVNI…YYSI, VVFI…GALP, and AIFH…LTIV.

It belongs to the ATPase A chain family. As to quaternary structure, F-type ATPases have 2 components, CF(1) - the catalytic core - and CF(0) - the membrane proton channel. CF(1) has five subunits: alpha(3), beta(3), gamma(1), delta(1), epsilon(1). CF(0) has three main subunits: a(1), b(2) and c(9-12). The alpha and beta chains form an alternating ring which encloses part of the gamma chain. CF(1) is attached to CF(0) by a central stalk formed by the gamma and epsilon chains, while a peripheral stalk is formed by the delta and b chains.

Its subcellular location is the cell inner membrane. In terms of biological role, key component of the proton channel; it plays a direct role in the translocation of protons across the membrane. In Aliivibrio salmonicida (strain LFI1238) (Vibrio salmonicida (strain LFI1238)), this protein is ATP synthase subunit a.